Here is a 155-residue protein sequence, read N- to C-terminus: Alanine- and arginine-rich domain-containing protein (155 aa).

The polypeptide is Alanine- and arginine-rich domain-containing protein (AARD) (Homo sapiens (Human)).